Consider the following 240-residue polypeptide: MRTLFIGDLHLSADRLDITQAFTRFLDTELDDADALYILGDLFEVWVGDDIALPFALELAEKLKQVSQKLPVYFIHGNRDFMLGKQYARAAGMQILPEVTCLNLYGIETVILHGDSLCTLDKAYQRFRKLRSLSLARWLYGCLSKKTRQGIADKIRSNSKSSNQQKSYTIMDVEPNAVDALFAKTHTKHMIHGHTHRPAIHQLANGCQRIVVGDWYEQGSVLSVSAEGINLQSLPFEQTT.

The Mn(2+) site is built by Asp8, His10, Asp41, Asn78, and His113. 78 to 79 is a binding site for substrate; it reads NR. Residues Asp121, Ser159, Asn163, Lys166, and His194 each contribute to the substrate site. Residues His194 and His196 each contribute to the Mn(2+) site.

The protein belongs to the LpxH family. The cofactor is Mn(2+).

The protein resides in the cell inner membrane. The enzyme catalyses UDP-2-N,3-O-bis[(3R)-3-hydroxytetradecanoyl]-alpha-D-glucosamine + H2O = 2-N,3-O-bis[(3R)-3-hydroxytetradecanoyl]-alpha-D-glucosaminyl 1-phosphate + UMP + 2 H(+). It functions in the pathway glycolipid biosynthesis; lipid IV(A) biosynthesis; lipid IV(A) from (3R)-3-hydroxytetradecanoyl-[acyl-carrier-protein] and UDP-N-acetyl-alpha-D-glucosamine: step 4/6. Hydrolyzes the pyrophosphate bond of UDP-2,3-diacylglucosamine to yield 2,3-diacylglucosamine 1-phosphate (lipid X) and UMP by catalyzing the attack of water at the alpha-P atom. Involved in the biosynthesis of lipid A, a phosphorylated glycolipid that anchors the lipopolysaccharide to the outer membrane of the cell. The polypeptide is UDP-2,3-diacylglucosamine hydrolase (Shewanella baltica (strain OS155 / ATCC BAA-1091)).